We begin with the raw amino-acid sequence, 298 residues long: Glutamyl-Q tRNA(Asp) synthetase (298 aa).

L-glutamate-binding positions include 8–12 (RFAPS) and E44. Positions 11-21 (PSPTGPLHFGS) match the 'HIGH' region motif. Residues C100, C102, Y123, and C127 each contribute to the Zn(2+) site. Positions 183 and 201 each coordinate L-glutamate. A 'KMSKS' region motif is present at residues 239-243 (KLSKQ). Position 242 (K242) interacts with ATP.

It belongs to the class-I aminoacyl-tRNA synthetase family. GluQ subfamily. Zn(2+) serves as cofactor.

Functionally, catalyzes the tRNA-independent activation of glutamate in presence of ATP and the subsequent transfer of glutamate onto a tRNA(Asp). Glutamate is transferred on the 2-amino-5-(4,5-dihydroxy-2-cyclopenten-1-yl) moiety of the queuosine in the wobble position of the QUC anticodon. The polypeptide is Glutamyl-Q tRNA(Asp) synthetase (Burkholderia cenocepacia (strain ATCC BAA-245 / DSM 16553 / LMG 16656 / NCTC 13227 / J2315 / CF5610) (Burkholderia cepacia (strain J2315))).